The following is a 544-amino-acid chain: L-aspartate oxidase (544 aa).

Residues 17–20 (SGGA), K39, 46–53 (STFYAQGG), and D221 contribute to the FAD site. Residue R288 is the Proton donor/acceptor of the active site. Residues E373 and 389 to 390 (SL) contribute to the FAD site.

The protein belongs to the FAD-dependent oxidoreductase 2 family. NadB subfamily. The cofactor is FAD.

The protein localises to the cytoplasm. The enzyme catalyses L-aspartate + O2 = iminosuccinate + H2O2. Its pathway is cofactor biosynthesis; NAD(+) biosynthesis; iminoaspartate from L-aspartate (oxidase route): step 1/1. Its function is as follows. Catalyzes the oxidation of L-aspartate to iminoaspartate, the first step in the de novo biosynthesis of NAD(+). This is L-aspartate oxidase from Acinetobacter baylyi (strain ATCC 33305 / BD413 / ADP1).